A 297-amino-acid chain; its full sequence is MDSKITRLIEQASVIVGALPYLQAYRDKTFLIKFGGSAMDDARLVKKLMRDIVLLEVLGFNPVIVHGGGKAISKAMAEAGLEARFVNGLRVTTPEAISIVERTLSGTINPGLVQMFRDYGGKGVGIPGTEIFVGERIHEKDEQGNPIDIGEVGNVIGCLTERITEALELQITPIVSPLAKELGTHKPLNVNADLAAAALAKELKPVKLIYISDVPGIMKDPSDPSTLIKSVTRTEALDLIKDGTVSGGMIPKIHSAIDALNAGVRKVHFIDGRLPHTLLLEIFTPDGIGTEIIREQR.

Residues 68-69, Arg-90, and Asn-189 contribute to the substrate site; that span reads GG.

The protein belongs to the acetylglutamate kinase family. ArgB subfamily.

The protein resides in the cytoplasm. It carries out the reaction N-acetyl-L-glutamate + ATP = N-acetyl-L-glutamyl 5-phosphate + ADP. It functions in the pathway amino-acid biosynthesis; L-arginine biosynthesis; N(2)-acetyl-L-ornithine from L-glutamate: step 2/4. Catalyzes the ATP-dependent phosphorylation of N-acetyl-L-glutamate. The chain is Acetylglutamate kinase from Akkermansia muciniphila (strain ATCC BAA-835 / DSM 22959 / JCM 33894 / BCRC 81048 / CCUG 64013 / CIP 107961 / Muc).